Here is a 457-residue protein sequence, read N- to C-terminus: Siroheme synthase 2 (457 aa).

The precorrin-2 dehydrogenase /sirohydrochlorin ferrochelatase stretch occupies residues 1–204 (MDHLPIFCQL…DDEQAVTRIT (204 aa)). NAD(+)-binding positions include 22–23 (DV) and 43–44 (LA). S128 carries the post-translational modification Phosphoserine. A uroporphyrinogen-III C-methyltransferase region spans residues 216-457 (GEVVLVGAGP…RDKLNWFSSK (242 aa)). S-adenosyl-L-methionine is bound at residue P225. D248 functions as the Proton acceptor in the catalytic mechanism. K270 serves as the catalytic Proton donor. S-adenosyl-L-methionine is bound by residues 301-303 (GGD), I306, 331-332 (TA), M382, and G411.

It in the N-terminal section; belongs to the precorrin-2 dehydrogenase / sirohydrochlorin ferrochelatase family. This sequence in the C-terminal section; belongs to the precorrin methyltransferase family.

It carries out the reaction uroporphyrinogen III + 2 S-adenosyl-L-methionine = precorrin-2 + 2 S-adenosyl-L-homocysteine + H(+). The catalysed reaction is precorrin-2 + NAD(+) = sirohydrochlorin + NADH + 2 H(+). The enzyme catalyses siroheme + 2 H(+) = sirohydrochlorin + Fe(2+). It participates in cofactor biosynthesis; adenosylcobalamin biosynthesis; precorrin-2 from uroporphyrinogen III: step 1/1. It functions in the pathway cofactor biosynthesis; adenosylcobalamin biosynthesis; sirohydrochlorin from precorrin-2: step 1/1. Its pathway is porphyrin-containing compound metabolism; siroheme biosynthesis; precorrin-2 from uroporphyrinogen III: step 1/1. The protein operates within porphyrin-containing compound metabolism; siroheme biosynthesis; siroheme from sirohydrochlorin: step 1/1. It participates in porphyrin-containing compound metabolism; siroheme biosynthesis; sirohydrochlorin from precorrin-2: step 1/1. Its function is as follows. Multifunctional enzyme that catalyzes the SAM-dependent methylations of uroporphyrinogen III at position C-2 and C-7 to form precorrin-2 via precorrin-1. Then it catalyzes the NAD-dependent ring dehydrogenation of precorrin-2 to yield sirohydrochlorin. Finally, it catalyzes the ferrochelation of sirohydrochlorin to yield siroheme. The protein is Siroheme synthase 2 of Cronobacter sakazakii (strain ATCC BAA-894) (Enterobacter sakazakii).